The chain runs to 700 residues: Constitutive coactivator of peroxisome proliferator-activated receptor gamma (700 aa).

The protein belongs to the constitutive coactivator of PPAR-gamma family. Interacts with ESR1 and RXRA. Interacts with PPARG; in a ligand-independent manner.

It is found in the nucleus. Its function is as follows. Functions as a transactivator of PPARG and ESR1. Functions in adipogenesis through PPARG activation. This is Constitutive coactivator of peroxisome proliferator-activated receptor gamma (FAM120B) from Bos taurus (Bovine).